Consider the following 122-residue polypeptide: Large ribosomal subunit protein uL14 (122 aa).

The protein belongs to the universal ribosomal protein uL14 family. Part of the 50S ribosomal subunit. Forms a cluster with proteins L3 and L19. In the 70S ribosome, L14 and L19 interact and together make contacts with the 16S rRNA in bridges B5 and B8.

Its function is as follows. Binds to 23S rRNA. Forms part of two intersubunit bridges in the 70S ribosome. This chain is Large ribosomal subunit protein uL14, found in Brucella abortus (strain 2308).